The primary structure comprises 625 residues: tRNA uridine 5-carboxymethylaminomethyl modification enzyme MnmG (625 aa).

FAD contacts are provided by residues G9–G14, V121, and S177. An NAD(+)-binding site is contributed by G271 to F285. FAD is bound at residue Q368.

Belongs to the MnmG family. As to quaternary structure, homodimer. Heterotetramer of two MnmE and two MnmG subunits. Requires FAD as cofactor.

It localises to the cytoplasm. In terms of biological role, NAD-binding protein involved in the addition of a carboxymethylaminomethyl (cmnm) group at the wobble position (U34) of certain tRNAs, forming tRNA-cmnm(5)s(2)U34. This is tRNA uridine 5-carboxymethylaminomethyl modification enzyme MnmG from Aliarcobacter butzleri (strain RM4018) (Arcobacter butzleri).